Consider the following 544-residue polypeptide: Chaperonin GroEL 1 (544 aa).

Residues 29-32, Lys50, 86-90, Gly414, and Asp494 contribute to the ATP site; these read TLGP and DGTTT.

This sequence belongs to the chaperonin (HSP60) family. Forms a cylinder of 14 subunits composed of two heptameric rings stacked back-to-back. Interacts with the co-chaperonin GroES.

It is found in the cytoplasm. The enzyme catalyses ATP + H2O + a folded polypeptide = ADP + phosphate + an unfolded polypeptide.. Together with its co-chaperonin GroES, plays an essential role in assisting protein folding. The GroEL-GroES system forms a nano-cage that allows encapsulation of the non-native substrate proteins and provides a physical environment optimized to promote and accelerate protein folding. This is Chaperonin GroEL 1 from Psychromonas ingrahamii (strain DSM 17664 / CCUG 51855 / 37).